The primary structure comprises 376 residues: Putative cytosolic 5'-nucleotidase 3 (376 aa).

Asp-119 functions as the Nucleophile in the catalytic mechanism. The Mg(2+) site is built by Asp-119 and Asp-121. Asp-121 serves as the catalytic Proton donor. Substrate-binding positions include Glu-168, Ser-189, 236 to 237, and Lys-286; that span reads SA. Asp-312 contacts Mg(2+).

It belongs to the pyrimidine 5'-nucleotidase family.

It localises to the cytoplasm. The enzyme catalyses a ribonucleoside 5'-phosphate + H2O = a ribonucleoside + phosphate. This Caenorhabditis elegans protein is Putative cytosolic 5'-nucleotidase 3.